A 501-amino-acid polypeptide reads, in one-letter code: Phenylalanine--tRNA ligase alpha subunit (501 aa).

The L-phenylalanine site is built by Thr340 and Phe423. Residue Glu425 coordinates Mg(2+). Phe448 is an L-phenylalanine binding site.

It belongs to the class-II aminoacyl-tRNA synthetase family. Phe-tRNA synthetase alpha subunit type 2 subfamily. Tetramer of two alpha and two beta subunits. Mg(2+) is required as a cofactor.

It localises to the cytoplasm. The catalysed reaction is tRNA(Phe) + L-phenylalanine + ATP = L-phenylalanyl-tRNA(Phe) + AMP + diphosphate + H(+). In Methanococcus maripaludis (strain C7 / ATCC BAA-1331), this protein is Phenylalanine--tRNA ligase alpha subunit.